A 152-amino-acid chain; its full sequence is Transcriptional repressor NrdR (152 aa).

A zinc finger lies at 3–34; that stretch reads CPFCNHGELKVIDSRNAPEANAIKRRRECLKC. The 91-residue stretch at 48–138 folds into the ATP-cone domain; the sequence is LQVLKRDGRY…VYRRFKDVGE (91 aa).

This sequence belongs to the NrdR family. Zn(2+) is required as a cofactor.

In terms of biological role, negatively regulates transcription of bacterial ribonucleotide reductase nrd genes and operons by binding to NrdR-boxes. The polypeptide is Transcriptional repressor NrdR (Chlamydia pneumoniae (Chlamydophila pneumoniae)).